Here is a 122-residue protein sequence, read N- to C-terminus: Large ribosomal subunit protein uL14c (122 aa).

This sequence belongs to the universal ribosomal protein uL14 family. In terms of assembly, part of the 50S ribosomal subunit.

It is found in the plastid. Its subcellular location is the chloroplast. In terms of biological role, binds to 23S rRNA. In Chlorella vulgaris (Green alga), this protein is Large ribosomal subunit protein uL14c.